Reading from the N-terminus, the 417-residue chain is Serine hydroxymethyltransferase (417 aa).

(6S)-5,6,7,8-tetrahydrofolate is bound by residues leucine 121 and 125–127 (GHL). The residue at position 229 (lysine 229) is an N6-(pyridoxal phosphate)lysine. 355 to 357 (SPF) serves as a coordination point for (6S)-5,6,7,8-tetrahydrofolate.

This sequence belongs to the SHMT family. Homodimer. The cofactor is pyridoxal 5'-phosphate.

It localises to the cytoplasm. It catalyses the reaction (6R)-5,10-methylene-5,6,7,8-tetrahydrofolate + glycine + H2O = (6S)-5,6,7,8-tetrahydrofolate + L-serine. It functions in the pathway one-carbon metabolism; tetrahydrofolate interconversion. Its pathway is amino-acid biosynthesis; glycine biosynthesis; glycine from L-serine: step 1/1. Catalyzes the reversible interconversion of serine and glycine with tetrahydrofolate (THF) serving as the one-carbon carrier. This reaction serves as the major source of one-carbon groups required for the biosynthesis of purines, thymidylate, methionine, and other important biomolecules. Also exhibits THF-independent aldolase activity toward beta-hydroxyamino acids, producing glycine and aldehydes, via a retro-aldol mechanism. The sequence is that of Serine hydroxymethyltransferase from Salmonella arizonae (strain ATCC BAA-731 / CDC346-86 / RSK2980).